The following is a 551-amino-acid chain: MRPQNVAGVAGTGALIMAAGALADQTVFHPTSLTAPFIEQFIESIPDSRWTVSRATKQTPVGDEIFSYVGQWEVEEPEVYPGIPGDKGLVLKTKAAHHAISTLFTEPIDPKGKSLVVQYEVKLQKGLECGGAYIKLLTDQQDEGLRAGEDYTDKTPFTIMFGPDKCGSTNKVHFIFRHKNPLTGEWEEKHLKNPPSPKITKTTALYTLITNPDQTFEILINDESVRKGSLLEDFDPAVNPPKEIDDPEDFKPETWVDEAEIEDITATKPDDWDEDAPMMITDTAAVKPVDWLEEEPETIPDPEAEKPEEWDDEEDGDWIPPMVPNPKCEDVSGCGPWTAPKIRNPDYKGKWTVPRIPNPDYKGPWAPRKIANPAFFEDLHPSDFTKIGGVGIELWTMTEDILFDNLYIGHDAAQAKKFAEETYHVKKPIEKEAEGSNEDELEEPSSLVEKVQLKVYEFLHLATFDIAQAIKQMPEVAAGLAAAVFTLLGMLLALFGFIGSAPTKVKQTTVKTKAVAPVAPAGEEEKKALDQAGVEIPAEGSKKRVTRSTKE.

An N-terminal signal peptide occupies residues 1 to 23 (MRPQNVAGVAGTGALIMAAGALA). Over 24-477 (DQTVFHPTSL…QAIKQMPEVA (454 aa)) the chain is Lumenal. The interval 293 to 315 (EEEPETIPDPEAEKPEEWDDEED) is disordered. Residues 478–498 (AGLAAAVFTLLGMLLALFGFI) form a helical membrane-spanning segment. The Cytoplasmic portion of the chain corresponds to 499–551 (GSAPTKVKQTTVKTKAVAPVAPAGEEEKKALDQAGVEIPAEGSKKRVTRSTKE). The segment at 526–551 (KKALDQAGVEIPAEGSKKRVTRSTKE) is disordered.

This sequence belongs to the calreticulin family.

The protein resides in the endoplasmic reticulum membrane. In terms of biological role, endoplasmic reticulum (ER) chaperone that functions to stabilize non-native glycoproteins and retain them in the ER until they are properly folded or targeted for ER associated degradation (ERAD). With co-chaperone DNJ1, coordinately maintains ER homeostasis and contributes to maintenance of cell wall architecture. The sequence is that of Calnexin from Cryptococcus neoformans var. grubii serotype A (strain H99 / ATCC 208821 / CBS 10515 / FGSC 9487) (Filobasidiella neoformans var. grubii).